Here is a 224-residue protein sequence, read N- to C-terminus: UPF0758 protein PLES_57141 (224 aa).

Residues 102–224 (ILESPQAVRD…PLSLAEYGWL (123 aa)) enclose the MPN domain. Positions 173, 175, and 186 each coordinate Zn(2+). Residues 173 to 186 (HNHPSGDARPSLAD) carry the JAMM motif motif.

This sequence belongs to the UPF0758 family.

This chain is UPF0758 protein PLES_57141, found in Pseudomonas aeruginosa (strain LESB58).